A 104-amino-acid chain; its full sequence is L-rhamnose mutarotase (104 aa).

Tyrosine 18 serves as a coordination point for substrate. Histidine 22 acts as the Proton donor in catalysis. Substrate is bound by residues tyrosine 41 and 76–77 (WW).

The protein belongs to the rhamnose mutarotase family. Homodimer.

The protein resides in the cytoplasm. It carries out the reaction alpha-L-rhamnose = beta-L-rhamnose. It functions in the pathway carbohydrate metabolism; L-rhamnose metabolism. In terms of biological role, involved in the anomeric conversion of L-rhamnose. This Oceanobacillus iheyensis (strain DSM 14371 / CIP 107618 / JCM 11309 / KCTC 3954 / HTE831) protein is L-rhamnose mutarotase.